The chain runs to 932 residues: Protocadherin gamma-A8 (932 aa).

The N-terminal stretch at 1–29 (MAAPQSRPRRGELILLCALLGTLWEIGRG) is a signal peptide. 6 Cadherin domains span residues 30 to 133 (QIRY…NPKF), 134 to 242 (QVED…APVF), 243 to 347 (PHPI…RPEV), 348 to 452 (IITS…PPTF), 453 to 562 (PHAS…APEI), and 570 to 682 (DGST…KPSV). Over 30 to 692 (QIRYSVPEET…DPNDSSLTLY (663 aa)) the chain is Extracellular. An N-linked (GlcNAc...) asparagine glycan is attached at Asn47. N-linked (GlcNAc...) asparagine glycans are attached at residues Asn414, Asn419, and Asn545. An N-linked (GlcNAc...) asparagine glycan is attached at Asn685. The chain crosses the membrane as a helical span at residues 693–713 (LVVAVAAISCVFLAFVAVLLG). Residues 714-932 (LRLRRWHKSR…KKKSGKKEKK (219 aa)) are Cytoplasmic-facing. Disordered regions lie at residues 804–841 (ADHG…WPNN) and 902–932 (ATLT…KEKK). The segment covering 810 to 841 (APPNTDWRFSQAQRPGTSGSQNGDDTGTWPNN) has biased composition (polar residues). Over residues 922–932 (NKKKSGKKEKK) the composition is skewed to basic residues.

It is found in the cell membrane. Its function is as follows. Potential calcium-dependent cell-adhesion protein. May be involved in the establishment and maintenance of specific neuronal connections in the brain. In Homo sapiens (Human), this protein is Protocadherin gamma-A8 (PCDHGA8).